Consider the following 474-residue polypeptide: Lactococcin A secretion protein LcnD (474 aa).

Residues 1-21 (MFDKKLLESSELYDKRYRNFS) are Cytoplasmic-facing. The chain crosses the membrane as a helical span at residues 22–44 (TLIILPLFILLVGGVIFTFFAHK). Topologically, residues 45–474 (ELTVISTGSI…LDKIMGRGNQ (430 aa)) are extracellular.

The protein belongs to the membrane fusion protein (MFP) (TC 8.A.1) family.

It is found in the cell membrane. Involved in the secretion of lactococcin A. The protein is Lactococcin A secretion protein LcnD (lcnD) of Lactococcus lactis subsp. cremoris (Streptococcus cremoris).